Consider the following 78-residue polypeptide: Omega-conotoxin-like 12 (78 aa).

The first 22 residues, 1–22 (MKLTCVVIVAVLLLTACQLITA), serve as a signal peptide directing secretion. A propeptide spanning residues 23–42 (DDSRGTQKHRSLRSTTKVSK) is cleaved from the precursor. 3 cysteine pairs are disulfide-bonded: cysteine 46/cysteine 62, cysteine 53/cysteine 65, and cysteine 61/cysteine 72.

It belongs to the conotoxin O1 superfamily. In terms of tissue distribution, expressed by the venom duct.

The protein resides in the secreted. Functionally, omega-conotoxins act at presynaptic membranes, they bind and block voltage-gated calcium channels (Cav). This chain is Omega-conotoxin-like 12, found in Conus striatus (Striated cone).